Consider the following 123-residue polypeptide: Small ribosomal subunit protein uS12 (123 aa).

Residues 1-25 form a disordered region; it reads MPTINQLVRKPRKSRSALNKAPALQ. A 3-methylthioaspartic acid modification is found at Asp90.

The protein belongs to the universal ribosomal protein uS12 family. As to quaternary structure, part of the 30S ribosomal subunit. Contacts proteins S8 and S17. May interact with IF1 in the 30S initiation complex.

With S4 and S5 plays an important role in translational accuracy. Functionally, interacts with and stabilizes bases of the 16S rRNA that are involved in tRNA selection in the A site and with the mRNA backbone. Located at the interface of the 30S and 50S subunits, it traverses the body of the 30S subunit contacting proteins on the other side and probably holding the rRNA structure together. The combined cluster of proteins S8, S12 and S17 appears to hold together the shoulder and platform of the 30S subunit. This chain is Small ribosomal subunit protein uS12, found in Ehrlichia canis (strain Jake).